The following is a 123-amino-acid chain: UPF0102 protein PputW619_0932 (123 aa).

It belongs to the UPF0102 family.

This is UPF0102 protein PputW619_0932 from Pseudomonas putida (strain W619).